The following is a 288-amino-acid chain: MEKYHGLEKIGEGTYGVVYKAQNSDGESFALKKIRLEKEDEGIPSTAIREISILKELRHSNIVKLYDVIHAKKRLILVFEHLDQDLKKLIDVCDGGLESVTAKSFLLQLLNGIAYCHEHRVLHRDLKPQNLLINREGELKIADFGLARAFGIPARRYTHEVVTLWYRAPDILMGSKKYSTPIDIWSVGCIFAEMVNGRPLFPGVSDTDQLMRIFKILGTPNSQNWPDVFKLPKYDPNFPVYEPLPWETFIKGLDDTGIDLLSKMLKLDPNQRITAKQAIEHPYFKETS.

Positions 4 to 284 (YHGLEKIGEG…AKQAIEHPYF (281 aa)) constitute a Protein kinase domain. Residues 10–18 (IGEGTYGVV) and K32 contribute to the ATP site. T14 bears the Phosphothreonine mark. Position 15 is a phosphotyrosine (Y15). Catalysis depends on D125, which acts as the Proton acceptor. Residue T158 is modified to Phosphothreonine.

The protein belongs to the protein kinase superfamily. CMGC Ser/Thr protein kinase family. CDC2/CDKX subfamily. May form a complex composed of at least the catalytic subunit CRK2 and a cyclin. Mg(2+) serves as cofactor.

Its subcellular location is the cytoplasm. The enzyme catalyses L-seryl-[protein] + ATP = O-phospho-L-seryl-[protein] + ADP + H(+). The catalysed reaction is L-threonyl-[protein] + ATP = O-phospho-L-threonyl-[protein] + ADP + H(+). It catalyses the reaction [DNA-directed RNA polymerase] + ATP = phospho-[DNA-directed RNA polymerase] + ADP + H(+). With respect to regulation, phosphorylation at Thr-14 or Tyr-15 inactivates the enzyme, while phosphorylation at Thr-158 activates it. In terms of biological role, serine/threonine-protein kinase. Involved in the control of the cell cycle. Required for entry into S-phase and mitosis. Probable component of the kinase complex that phosphorylates the repetitive C-terminus of RNA polymerase II. The polypeptide is Cyclin-dependent kinase 2 homolog (Plasmodium chabaudi chabaudi).